Here is a 118-residue protein sequence, read N- to C-terminus: MSREITARPNKNVPIVVGVCVVAFFVLLAFMQQKHKTHSGGDYGVPTFSNGGKYRDGTRSADFNSNNHRAYGCGGSGGSVSSRVGQQLVVLAIVSVLIVSLLQRLRSPPEHICNGACG.

The Cytoplasmic segment spans residues 1-11 (MSREITARPNK). The helical transmembrane segment at 12–32 (NVPIVVGVCVVAFFVLLAFMQ) threads the bilayer. Residues 33-81 (QKHKTHSGGDYGVPTFSNGGKYRDGTRSADFNSNNHRAYGCGGSGGSVS) lie on the Lumenal side of the membrane. A helical membrane pass occupies residues 82–102 (SRVGQQLVVLAIVSVLIVSLL). Residues 103–118 (QRLRSPPEHICNGACG) are Cytoplasmic-facing.

The protein belongs to the virgaviridae/benyvirus TGB2 movement protein family. As to quaternary structure, interacts with movement protein TGB3.

It is found in the host cell junction. It localises to the host plasmodesma. The protein resides in the host endoplasmic reticulum membrane. Participates in the transport of viral RNA to the plasmodesmata. Is probably targeted to plasmodesmata by TGBp3, along with viral RNAs-TGBp1 (RNP complex). Can gate plasmodesmata and increase their size exclusion limit. This chain is Movement protein TGB2, found in Beet necrotic yellow vein virus (isolate Japan/S) (BNYVV).